A 345-amino-acid polypeptide reads, in one-letter code: Phosphoribosylformylglycinamidine cyclo-ligase (345 aa).

It belongs to the AIR synthase family.

Its subcellular location is the cytoplasm. The enzyme catalyses 2-formamido-N(1)-(5-O-phospho-beta-D-ribosyl)acetamidine + ATP = 5-amino-1-(5-phospho-beta-D-ribosyl)imidazole + ADP + phosphate + H(+). It functions in the pathway purine metabolism; IMP biosynthesis via de novo pathway; 5-amino-1-(5-phospho-D-ribosyl)imidazole from N(2)-formyl-N(1)-(5-phospho-D-ribosyl)glycinamide: step 2/2. This Escherichia coli O127:H6 (strain E2348/69 / EPEC) protein is Phosphoribosylformylglycinamidine cyclo-ligase.